Here is a 23-residue protein sequence, read N- to C-terminus: Paralytic peptide 1 (23 aa).

C7 and C19 are oxidised to a cystine.

This sequence belongs to the GBP/PSP1/paralytic peptide family. In terms of tissue distribution, hemolymph.

Its function is as follows. Causes rapid, rigid paralysis when injected into Lepidopteran larvae. The physiological role may be to reduce hemolymph loss following injury and promote wound healing. The sequence is that of Paralytic peptide 1 from Spodoptera exigua (Beet armyworm).